Consider the following 237-residue polypeptide: Uridylate kinase (237 aa).

Lys-11 to Gly-14 contacts ATP. The interval Gly-18 to Gly-23 is involved in allosteric activation by GTP. Gly-52 lines the UMP pocket. Residues Gly-53 and Arg-57 each contribute to the ATP site. UMP is bound by residues Asp-72 and Ser-133–Thr-140. Residues Gln-161, Tyr-167, and Asp-170 each coordinate ATP.

This sequence belongs to the UMP kinase family. Homohexamer.

It localises to the cytoplasm. The catalysed reaction is UMP + ATP = UDP + ADP. It participates in pyrimidine metabolism; CTP biosynthesis via de novo pathway; UDP from UMP (UMPK route): step 1/1. Allosterically activated by GTP. Inhibited by UTP. Its function is as follows. Catalyzes the reversible phosphorylation of UMP to UDP. The protein is Uridylate kinase of Cutibacterium acnes (strain DSM 16379 / KPA171202) (Propionibacterium acnes).